The sequence spans 154 residues: Ribosomal RNA large subunit methyltransferase H (154 aa).

Glycine 103 is a binding site for S-adenosyl-L-methionine.

This sequence belongs to the RNA methyltransferase RlmH family. As to quaternary structure, homodimer.

The protein localises to the cytoplasm. The catalysed reaction is pseudouridine(1915) in 23S rRNA + S-adenosyl-L-methionine = N(3)-methylpseudouridine(1915) in 23S rRNA + S-adenosyl-L-homocysteine + H(+). Functionally, specifically methylates the pseudouridine at position 1915 (m3Psi1915) in 23S rRNA. The sequence is that of Ribosomal RNA large subunit methyltransferase H from Gemmatimonas aurantiaca (strain DSM 14586 / JCM 11422 / NBRC 100505 / T-27).